The chain runs to 247 residues: Carboxy-S-adenosyl-L-methionine synthase (247 aa).

S-adenosyl-L-methionine-binding positions include tyrosine 40, 65–67 (GAS), 90–91 (DN), 122–123 (DI), asparagine 137, and arginine 204.

Belongs to the class I-like SAM-binding methyltransferase superfamily. Cx-SAM synthase family. Homodimer.

It catalyses the reaction prephenate + S-adenosyl-L-methionine = carboxy-S-adenosyl-L-methionine + 3-phenylpyruvate + H2O. Functionally, catalyzes the conversion of S-adenosyl-L-methionine (SAM) to carboxy-S-adenosyl-L-methionine (Cx-SAM). This chain is Carboxy-S-adenosyl-L-methionine synthase, found in Pseudomonas entomophila (strain L48).